The sequence spans 720 residues: Nucleoporin NUP2 (720 aa).

The interval 1-33 (MAKRVADAQIQRETYDSNESDDDVTPSTKVASS) is disordered. Ser17 and Ser20 each carry phosphoserine. The interaction with SRP1 NLS binding site 1 stretch occupies residues 35 to 50 (VMNRRKIAMPKRRMAF). Disordered regions lie at residues 52-92 (PFGS…SNSR) and 136-278 (KSIE…VDNN). An FXF 1 repeat occupies 67–69 (FSF). Positions 81–92 (VDNSPTTESNSR) are enriched in polar residues. Position 137 is a phosphoserine (Ser137). Residues 147–159 (NDAKPAKVEDVQK) show a composition bias toward basic and acidic residues. Phosphoserine is present on Ser165. An FXFG 1 repeat occupies 189–192 (FSFG). Basic and acidic residues predominate over residues 193 to 202 (PKKENRKKDE). Ser203 and Ser205 each carry phosphoserine. FXF repeat units follow at residues 216–218 (FKF) and 247–249 (FSF). Positions 243 to 278 (NAKPFSFSSATSTTEQTKSKNPLSLTEATKTNVDNN) are enriched in polar residues. 3 FXFG repeats span residues 285–288 (FTFG), 302–305 (FVFG), and 318–321 (FTFG). Over residues 315–324 (KSSFTFGSTT) the composition is skewed to polar residues. Positions 315-604 (KSSFTFGSTT…KPINLQNGEE (290 aa)) are disordered. Residues 345–360 (SNDSNPSFSFSIPSKN) show a composition bias toward low complexity. Phosphoserine occurs at positions 348 and 351. One copy of the FXF 4 repeat lies at 352–354 (FSF). A Phosphothreonine modification is found at Thr361. The FXFG 5 repeat unit spans residues 369 to 372 (FSFG). Residues 373–384 (VPNSSKNETSKP) are compositionally biased toward polar residues. The FXFG 6 repeat unit spans residues 386–389 (FSFG). Positions 424 to 435 (TEKEKESKKDSK) are enriched in basic and acidic residues. FXFG repeat units follow at residues 438–441 (FSFG), 474–477 (FSFG), 493–496 (FTFG), 511–514 (FSFG), and 524–527 (FSFG). Low complexity predominate over residues 479–495 (NTNTTKTADTKAPTFTF). A compositionally biased stretch (polar residues) spans 513 to 533 (FGTSQPNNTPSFSFGKTTANL). A compositionally biased stretch (low complexity) spans 534 to 548 (PANSSTSPAPSIPST). Residues 550 to 552 (FKF) form an FXF 5 repeat. Residues 574-584 (TEATGNESQDA) are compositionally biased toward polar residues. Ser581 is subject to Phosphoserine. A RanBD1 domain is found at 583 to 720 (DATKVDATPE…AIEDAKKEMK (138 aa)). Thr590 is subject to Phosphothreonine.

In terms of assembly, component of the nuclear pore complex (NPC). NPC constitutes the exclusive means of nucleocytoplasmic transport. NPCs allow the passive diffusion of ions and small molecules and the active, nuclear transport receptor-mediated bidirectional transport of macromolecules such as proteins, RNAs, ribonucleoparticles (RNPs), and ribosomal subunits across the nuclear envelope. Due to its 8-fold rotational symmetry, all subunits are present with 8 copies or multiples thereof. Binds to the nuclear basket of the NPC through NUP60 in a (GSP1, GSP2) GTPase-GTP-dependent manner. Interacts through its FG repeats with nuclear transport factors. Interacts with KAP122.

The protein localises to the nucleus. The protein resides in the nuclear pore complex. It localises to the nucleus membrane. Its function is as follows. Functions as a component of the nuclear pore complex (NPC). NPC components, collectively referred to as nucleoporins (NUPs), can play the role of both NPC structural components and of docking or interaction partners for transiently associated nuclear transport factors. Active directional transport is assured by both, a Phe-Gly (FG) repeat affinity gradient for these transport factors across the NPC and a transport cofactor concentration gradient across the nuclear envelope (GSP1 and GSP2 GTPases associated predominantly with GTP in the nucleus, with GDP in the cytoplasm). As one of the FG repeat nucleoporins NUP2 is involved in interactions with and guidance of nuclear transport receptors such as SRP1-KAP95 (importin alpha and beta) through the NPC. Like the closely related NUP1 it also plays an important role in disassembling and recycling SRP1-KAP95 to the cytoplasm after nuclear import. Upon entry of the heterotrimeric SRP1-KAP95-cargo complex in the nucleus, NUP2 binds through its N-terminus to the SRP1 nuclear localization signal (NLS) binding site, thus accelerating the release of the NLS-cargo. SRP1 in turn is released from NUP2 by binding of the GSP1-GTP associated export factor CSE1. NUP2 may also have a chromatin boundary/insulator activity through indirect interaction with genomic DNA via CSE1 and blocking of heterochromatin spreading. This Saccharomyces cerevisiae (strain ATCC 204508 / S288c) (Baker's yeast) protein is Nucleoporin NUP2 (NUP2).